The chain runs to 423 residues: Type II methyltransferase M.BamHI (423 aa).

Over residues 397–414 the composition is skewed to basic and acidic residues; the sequence is DFRQDHEGNSKGDKKNEN. A disordered region spans residues 397 to 423; that stretch reads DFRQDHEGNSKGDKKNENNDQISLSLE.

It belongs to the N(4)/N(6)-methyltransferase family.

The enzyme catalyses a 2'-deoxycytidine in DNA + S-adenosyl-L-methionine = an N(4)-methyl-2'-deoxycytidine in DNA + S-adenosyl-L-homocysteine + H(+). A beta subtype methylase, recognizes the double-stranded sequence 5'-GGATCC-3', methylates C-5 on both strands, and protects the DNA from cleavage by the BamHI endonuclease. This chain is Type II methyltransferase M.BamHI, found in Bacillus amyloliquefaciens (Bacillus velezensis).